The chain runs to 504 residues: Aspartyl/glutamyl-tRNA(Asn/Gln) amidotransferase subunit B (504 aa).

It belongs to the GatB/GatE family. GatB subfamily. As to quaternary structure, heterotrimer of A, B and C subunits.

It carries out the reaction L-glutamyl-tRNA(Gln) + L-glutamine + ATP + H2O = L-glutaminyl-tRNA(Gln) + L-glutamate + ADP + phosphate + H(+). The enzyme catalyses L-aspartyl-tRNA(Asn) + L-glutamine + ATP + H2O = L-asparaginyl-tRNA(Asn) + L-glutamate + ADP + phosphate + 2 H(+). In terms of biological role, allows the formation of correctly charged Asn-tRNA(Asn) or Gln-tRNA(Gln) through the transamidation of misacylated Asp-tRNA(Asn) or Glu-tRNA(Gln) in organisms which lack either or both of asparaginyl-tRNA or glutaminyl-tRNA synthetases. The reaction takes place in the presence of glutamine and ATP through an activated phospho-Asp-tRNA(Asn) or phospho-Glu-tRNA(Gln). This Tropheryma whipplei (strain TW08/27) (Whipple's bacillus) protein is Aspartyl/glutamyl-tRNA(Asn/Gln) amidotransferase subunit B.